Reading from the N-terminus, the 75-residue chain is UPF0154 protein MYPU_1460 (75 aa).

A helical membrane pass occupies residues glycine 8–valine 28.

Belongs to the UPF0154 family.

It localises to the membrane. The protein is UPF0154 protein MYPU_1460 of Mycoplasmopsis pulmonis (strain UAB CTIP) (Mycoplasma pulmonis).